The chain runs to 723 residues: Homeobox protein vnd (723 aa).

4 disordered regions span residues 1–115, 224–307, 465–549, and 703–723; these read MTTS…GLAP, AHHG…HHHP, GSSG…RKRR, and HAHA…AWWP. Basic and acidic residues predominate over residues 10 to 22; the sequence is TPSKRDRDRERDN. Positions 23-36 are enriched in low complexity; sequence SSGLGSAGSLPASP. Residues 37 to 48 are compositionally biased toward polar residues; it reads QSAITVSPSSPA. Positions 61 to 92 are enriched in basic and acidic residues; the sequence is LERKREREDREDREDRKERQERHERDRDHERF. The segment covering 97-111 has biased composition (low complexity); that stretch reads STASTTVPTNTSSSS. Residues 226 to 235 show a composition bias toward basic and acidic residues; sequence HGSDLSHHSA. The span at 237-255 shows a compositional bias: polar residues; that stretch reads ESTSGHRGQGSHTSPSALS. Over residues 278–289 the composition is skewed to basic and acidic residues; the sequence is EADHHSTTEHHA. The segment covering 298-307 has biased composition (basic residues); sequence HPHHQQHHHP. Residues 483 to 493 show a composition bias toward low complexity; the sequence is NNNNNTTNNNN. The span at 512 to 528 shows a compositional bias: acidic residues; it reads LNEDGIEEDIDDVDDAD. The segment at residues 545–604 is a DNA-binding region (homeobox); it reads KRKRRVLFTKAQTYELERRFRQQRYLSAPEREHLASLIRLTPTQVKIWFQNHRYKTKRAQ. The segment covering 703 to 716 has biased composition (basic residues); sequence HAHAHGHGHPHAHA.

It belongs to the NK-2 homeobox family. In terms of tissue distribution, expressed in the CNS and midgut.

The protein resides in the nucleus. Probable transcriptional regulator involved in the regulation of the proneural AS-C genes and the neurogenic genes of the enhancer of split complex. Could specifically activate proneural genes in the ventral-most neuroectoderm. The protein is Homeobox protein vnd (vnd) of Drosophila melanogaster (Fruit fly).